A 149-amino-acid chain; its full sequence is D-aminoacyl-tRNA deacylase (149 aa).

A Gly-cisPro motif, important for rejection of L-amino acids motif is present at residues 137-138 (GP).

This sequence belongs to the DTD family. Homodimer.

Its subcellular location is the cytoplasm. The enzyme catalyses glycyl-tRNA(Ala) + H2O = tRNA(Ala) + glycine + H(+). It catalyses the reaction a D-aminoacyl-tRNA + H2O = a tRNA + a D-alpha-amino acid + H(+). Its function is as follows. An aminoacyl-tRNA editing enzyme that deacylates mischarged D-aminoacyl-tRNAs. Also deacylates mischarged glycyl-tRNA(Ala), protecting cells against glycine mischarging by AlaRS. Acts via tRNA-based rather than protein-based catalysis; rejects L-amino acids rather than detecting D-amino acids in the active site. By recycling D-aminoacyl-tRNA to D-amino acids and free tRNA molecules, this enzyme counteracts the toxicity associated with the formation of D-aminoacyl-tRNA entities in vivo and helps enforce protein L-homochirality. In Janthinobacterium sp. (strain Marseille) (Minibacterium massiliensis), this protein is D-aminoacyl-tRNA deacylase.